Consider the following 289-residue polypeptide: 4-hydroxy-3-methylbut-2-enyl diphosphate reductase (289 aa).

C13 serves as a coordination point for [4Fe-4S] cluster. H42 and H74 together coordinate (2E)-4-hydroxy-3-methylbut-2-enyl diphosphate. Positions 42 and 74 each coordinate dimethylallyl diphosphate. The isopentenyl diphosphate site is built by H42 and H74. C96 is a [4Fe-4S] cluster binding site. Residue H124 participates in (2E)-4-hydroxy-3-methylbut-2-enyl diphosphate binding. H124 is a binding site for dimethylallyl diphosphate. H124 serves as a coordination point for isopentenyl diphosphate. E126 (proton donor) is an active-site residue. T165 provides a ligand contact to (2E)-4-hydroxy-3-methylbut-2-enyl diphosphate. C193 contacts [4Fe-4S] cluster. (2E)-4-hydroxy-3-methylbut-2-enyl diphosphate contacts are provided by S221, N223, and S265. Dimethylallyl diphosphate-binding residues include S221, N223, and S265. Positions 221, 223, and 265 each coordinate isopentenyl diphosphate.

This sequence belongs to the IspH family. [4Fe-4S] cluster is required as a cofactor.

It carries out the reaction isopentenyl diphosphate + 2 oxidized [2Fe-2S]-[ferredoxin] + H2O = (2E)-4-hydroxy-3-methylbut-2-enyl diphosphate + 2 reduced [2Fe-2S]-[ferredoxin] + 2 H(+). The enzyme catalyses dimethylallyl diphosphate + 2 oxidized [2Fe-2S]-[ferredoxin] + H2O = (2E)-4-hydroxy-3-methylbut-2-enyl diphosphate + 2 reduced [2Fe-2S]-[ferredoxin] + 2 H(+). Its pathway is isoprenoid biosynthesis; dimethylallyl diphosphate biosynthesis; dimethylallyl diphosphate from (2E)-4-hydroxy-3-methylbutenyl diphosphate: step 1/1. The protein operates within isoprenoid biosynthesis; isopentenyl diphosphate biosynthesis via DXP pathway; isopentenyl diphosphate from 1-deoxy-D-xylulose 5-phosphate: step 6/6. Its activity is regulated as follows. Highly sensitive to dioxygen. In terms of biological role, catalyzes the conversion of 1-hydroxy-2-methyl-2-(E)-butenyl 4-diphosphate (HMBPP) into a mixture of isopentenyl diphosphate (IPP) and dimethylallyl diphosphate (DMAPP). Acts in the terminal step of the DOXP/MEP pathway for isoprenoid precursor biosynthesis. In Aquifex aeolicus (strain VF5), this protein is 4-hydroxy-3-methylbut-2-enyl diphosphate reductase.